We begin with the raw amino-acid sequence, 144 residues long: Phosphomevalonate dehydratase small subunit (144 aa).

The active-site Proton acceptor is the S65.

It belongs to the AcnX type II small subunit family. As to quaternary structure, heterodimer composed of a large subunit (PMDh-L) and a small subunit (PMDh-S).

It catalyses the reaction (R)-5-phosphomevalonate = (2E)-3-methyl-5-phosphooxypent-2-enoate + H2O. The protein operates within isoprenoid biosynthesis; isopentenyl diphosphate biosynthesis via mevalonate pathway. Component of a hydro-lyase that catalyzes the dehydration of mevalonate 5-phosphate (MVA5P) to form trans-anhydromevalonate 5-phosphate (tAHMP). Involved in the archaeal mevalonate (MVA) pathway, which provides fundamental precursors for isoprenoid biosynthesis, such as isopentenyl diphosphate (IPP) and dimethylallyl diphosphate (DMAPP). In Methanosarcina acetivorans (strain ATCC 35395 / DSM 2834 / JCM 12185 / C2A), this protein is Phosphomevalonate dehydratase small subunit.